Here is a 607-residue protein sequence, read N- to C-terminus: Arginine decarboxylase (607 aa).

An N6-(pyridoxal phosphate)lysine modification is found at K104. 290–300 (LDCGGGLGVDY) contributes to the substrate binding site.

This sequence belongs to the Orn/Lys/Arg decarboxylase class-II family. SpeA subfamily. Requires pyridoxal 5'-phosphate as cofactor. Mg(2+) is required as a cofactor.

It carries out the reaction L-arginine + H(+) = agmatine + CO2. Its pathway is amine and polyamine biosynthesis; agmatine biosynthesis; agmatine from L-arginine: step 1/1. The chain is Arginine decarboxylase (SPE1) from Avena sativa (Oat).